The chain runs to 253 residues: uncharacterized protein (253 aa).

Substrate is bound at residue S145. Y159 functions as the Proton acceptor in the catalytic mechanism.

This sequence belongs to the short-chain dehydrogenases/reductases (SDR) family.

This is an uncharacterized protein from Mycobacterium tuberculosis (strain CDC 1551 / Oshkosh).